Consider the following 52-residue polypeptide: Conotoxin Cal9.2d (52 aa).

A propeptide spanning residues 1–6 (KRGVTL) is cleaved from the precursor. 3 cysteine pairs are disulfide-bonded: Cys-14-Cys-31, Cys-19-Cys-41, and Cys-21-Cys-46.

As to expression, expressed by the venom duct.

The protein localises to the secreted. Functionally, probable neurotoxin with unknown target. Possibly targets ion channels. This is Conotoxin Cal9.2d from Californiconus californicus (California cone).